The chain runs to 536 residues: Membrane protein insertase YidC (536 aa).

The next 5 membrane-spanning stretches (helical) occupy residues 7–27, 338–358, 419–439, 453–473, and 494–514; these read FFIF…QSQS, LLST…LITF, LPVF…IGSV, LSDQ…MFFI, and PFIF…YYIV.

Belongs to the OXA1/ALB3/YidC family. Type 1 subfamily. Interacts with the Sec translocase complex via SecD. Specifically interacts with transmembrane segments of nascent integral membrane proteins during membrane integration.

It localises to the cell membrane. In terms of biological role, required for the insertion and/or proper folding and/or complex formation of integral membrane proteins into the membrane. Involved in integration of membrane proteins that insert both dependently and independently of the Sec translocase complex, as well as at least some lipoproteins. Aids folding of multispanning membrane proteins. The protein is Membrane protein insertase YidC of Buchnera aphidicola subsp. Schizaphis graminum (strain Sg).